The following is a 533-amino-acid chain: T-complex protein 1 subunit delta (533 aa).

Positions 1–15 (MAQSQVGKGSPSNAT) are enriched in polar residues. A disordered region spans residues 1 to 25 (MAQSQVGKGSPSNATFRDKEKPQEV). Positions 16-25 (FRDKEKPQEV) are enriched in basic and acidic residues.

This sequence belongs to the TCP-1 chaperonin family. Heterooligomeric complex of about 850 to 900 kDa that forms two stacked rings, 12 to 16 nm in diameter.

The protein resides in the cytoplasm. Molecular chaperone; assists the folding of proteins upon ATP hydrolysis. Known to play a role, in vitro, in the folding of actin and tubulin. The protein is T-complex protein 1 subunit delta (CCT4) of Debaryomyces hansenii (strain ATCC 36239 / CBS 767 / BCRC 21394 / JCM 1990 / NBRC 0083 / IGC 2968) (Yeast).